We begin with the raw amino-acid sequence, 392 residues long: 23S rRNA (uracil(747)-C(5))-methyltransferase RlmC (392 aa).

Residues C4, C12, C15, and C93 each coordinate [4Fe-4S] cluster. S-adenosyl-L-methionine-binding residues include Q218, F247, E275, and N321. Residue C348 is the Nucleophile of the active site.

The protein belongs to the class I-like SAM-binding methyltransferase superfamily. RNA M5U methyltransferase family. RlmC subfamily.

The catalysed reaction is uridine(747) in 23S rRNA + S-adenosyl-L-methionine = 5-methyluridine(747) in 23S rRNA + S-adenosyl-L-homocysteine + H(+). Catalyzes the formation of 5-methyl-uridine at position 747 (m5U747) in 23S rRNA. The chain is 23S rRNA (uracil(747)-C(5))-methyltransferase RlmC from Haemophilus influenzae (strain 86-028NP).